Reading from the N-terminus, the 75-residue chain is uncharacterized protein (75 aa).

This is an uncharacterized protein from Bovine papillomavirus type 3.